We begin with the raw amino-acid sequence, 150 residues long: uncharacterized protein (150 aa).

Over residues 81–90 the composition is skewed to polar residues; it reads TTKPSCSFAQ. Residues 81-125 are disordered; sequence TTKPSCSFAQPVTPRTREGAGVRGHRRRRRGSLSLIPWKTSNDKQ.

This is an uncharacterized protein from Homo sapiens (Human).